Here is a 296-residue protein sequence, read N- to C-terminus: Magnetosome protein MamB (296 aa).

Residues 1 to 12 (MKFENCRDCREE) lie on the Cytoplasmic side of the membrane. The transmembrane domain (TMD) stretch occupies residues 1 to 214 (MKFENCRDCR…GLMDSSVDTE (214 aa)). Residues 13–33 (VVWWAFTADICMTLFKGVLGL) form a helical membrane-spanning segment. The Lumenal segment spans residues 34–83 (MSGSVALVADSLHSGADVVASGVTQLSLKISNKPADERYPFGYGNIQYIS). The chain crosses the membrane as a helical span at residues 84–104 (SSIVGSLLLIGASFLMYGSVM). Topologically, residues 105-112 (KLISGTYE) are cytoplasmic. The chain crosses the membrane as a helical span at residues 113–133 (APSIFAAVGASVTVIVNELMY). Residues 134–164 (RYQICVGNENNSPAIIANAWDNRSDAISSAA) are Lumenal-facing. A helical transmembrane segment spans residues 165-185 (VMVGVIASVIGFPIADTIAAI). At 186 to 296 (GVSALVGRIG…SPAPAAAARA (111 aa)) the chain is on the cytoplasmic side. Positions 215–296 (LLQTAWQVAM…SPAPAAAARA (82 aa)) are C-terminal domain (CTD).

It belongs to the cation diffusion facilitator (CDF) transporter (TC 2.A.4) family. Forms heterodimers with MamM. Probably interacts with MamE.

It is found in the magnetosome membrane. Plays a dual, essential role in magnetosome formation; required for magnetosome vesicle formation as well as biomineralization. Probably binds and transports iron. Requires heterodimerization with MamM for stability. This chain is Magnetosome protein MamB (mamB), found in Paramagnetospirillum magneticum (strain ATCC 700264 / AMB-1) (Magnetospirillum magneticum).